The primary structure comprises 586 residues: MRTEAALQLGFCALCVMLALLGEGMGRELPDPPAVNCVWSRWAPWSSCDPCTNTRRRSRGVEVFGQFAGIACQGSVGDREYCITNAKCNLPPPRECSDSEFQCESGSCIKLRLKCNGDYDCEDGSDEDCEPLRKTCPPTVLDTNEQGRTAGYGINILGADPRMNPFNNDFFNGRCDKVRNPNTLQLDRLPWNIGVLNYQTLVEETASREIYEDSYSLLREMLKEMSIKVDAGLSFKFKSTEPSMSNNSLKLDASLEYEKKTMIKDVSELTNIKNKSFMRVKGRLQLSTYRMRSHQLQVADEFVAHVKSLPLEYEKGIYYAFLEDYGTHYTKNGKSGGEYELVYVLNQDTIKAKNLTERKIQECLKIGIEAEFATTSVQDGKAHAKLNKCDDVTTKSQGDVEGKAVVDNVMTSVKGGSLESAVTMRAKLNKEGVMDIATYQNWARTIASAPALINSEPEPIYMLIPTDIPGANSRIANLKQATADYVAEYNVCKCRPCHNGGTLALLDGKCICMCSNLFEGLGCQNFKGDKARVPAARPAVTQEGNWSCWSSWSNCQGQKRSRTRYCNTEGVLGAECRGEIRSEEYC.

The first 26 residues, 1 to 26 (MRTEAALQLGFCALCVMLALLGEGMG), serve as a signal peptide directing secretion. A TSP type-1 1 domain is found at 36-89 (NCVWSRWAPWSSCDPCTNTRRRSRGVEVFGQFAGIACQGSVGDREYCITNAKCN). Cystine bridges form between Cys-37–Cys-72, Cys-48–Cys-82, Cys-51–Cys-88, Cys-96–Cys-108, Cys-103–Cys-121, Cys-115–Cys-129, and Cys-136–Cys-175. The LDL-receptor class A domain occupies 94–131 (RECSDSEFQCESGSCIKLRLKCNGDYDCEDGSDEDCEP). The region spanning 132–493 (LRKTCPPTVL…DYVAEYNVCK (362 aa)) is the MACPF domain. Residues 229-236 (VDAGLSFK) form a beta stranded membrane-spanning segment. N-linked (GlcNAc...) asparagine glycans are attached at residues Asn-246, Asn-274, and Asn-354. 2 beta stranded membrane-spanning segments follow: residues 357 to 364 (ERKIQECL) and 365 to 373 (KIGIEAEFA). 4 cysteine pairs are disulfide-bonded: Cys-363/Cys-389, Cys-494/Cys-510, Cys-497/Cys-512, and Cys-514/Cys-523. In terms of domain architecture, EGF-like spans 494–524 (CRPCHNGGTLALLDGKCICMCSNLFEGLGCQ). The TSP type-1 2 domain occupies 543–585 (EGNWSCWSSWSNCQGQKRSRTRYCNTEGVLGAECRGEIRSEEY). Asn-545 is a glycosylation site (N-linked (GlcNAc...) asparagine).

The protein belongs to the complement C6/C7/C8/C9 family. As to quaternary structure, homooligomer; about 20 C9 chains oligomerize to give rise to a huge beta-barrel that forms a 100 Angstrom diameter pore in target membranes. Component of the membrane attack complex (MAC), composed of complement C5b, C6, C7, C8A, C8B, C8G and multiple copies of the pore-forming subunit C9.

Its subcellular location is the secreted. The protein localises to the target cell membrane. In terms of biological role, pore-forming component of the membrane attack complex (MAC), a multiprotein complex activated by the complement cascade, which inserts into a target cell membrane and forms a pore, leading to target cell membrane rupture and cell lysis. The MAC is initiated by proteolytic cleavage of C5 into complement C5b in response to the classical, alternative, lectin and GZMK complement pathways. The complement pathways consist in a cascade of proteins that leads to phagocytosis and breakdown of pathogens and signaling that strengthens the adaptive immune system. Constitutes the pore-forming subunit of the MAC complex: during MAC assembly, C9 associates with the C5b8 intermediate complex, and polymerizes to complete the pore. This Takifugu rubripes (Japanese pufferfish) protein is Complement component C9 (c9).